Consider the following 1097-residue polypeptide: DNA-directed RNA polymerase subunit beta (1097 aa).

The disordered stretch occupies residues 1072–1097 (QDVNPRRSTPSRPTYESLGVADYDED).

It belongs to the RNA polymerase beta chain family. In cyanobacteria the RNAP catalytic core is composed of 2 alpha, 1 beta, 1 beta', 1 gamma and 1 omega subunit. When a sigma factor is associated with the core the holoenzyme is formed, which can initiate transcription.

The enzyme catalyses RNA(n) + a ribonucleoside 5'-triphosphate = RNA(n+1) + diphosphate. Its function is as follows. DNA-dependent RNA polymerase catalyzes the transcription of DNA into RNA using the four ribonucleoside triphosphates as substrates. The protein is DNA-directed RNA polymerase subunit beta of Synechococcus sp. (strain WH7803).